A 1390-amino-acid chain; its full sequence is MSDNSSNQFLLLLAAAQQQQQQQLLQQQLAKIQKATASSPSKSTNGTSASTSAVPSTSGTSSSQNEAAQLQNLAKMQQIQQLAQFGALMAAQKKQQEKAAADKAKEKEKEKQKAAAAAAAAAAKASASTSSASAIPGLSPEMLAAWQQAIQMQALQQMMMTPQKSQMEEAIKKMMDMAKKKPAGVASTSSASTSSSTPSTSSASITSSNNNAANNAASNMMNNVMWQLVAAQMQQKQQQQQKDTQKKADQAKKAKELAKQQQKEQDVKNKQQEEILKFLMAQHQLNHQKKHEKKQADAAALAAKVLAAHRAALESDSPEEGKKTNEAMLRLPLQLGWRRQTCVRSIASAGVKGDVSYFAPCGKKLSTYSEVVRYLTKNSIHYITRDNFLFNTKLVIGEFIVPKQTEADETQQEREFAMFTEDDINKELTRLNVLKFVPKIQASTSNGVHEDDIKMSKIEEPDEPLDPSELNDEFTEELVHSQIMSNGVDECKIREREADDLLVNINDVRHLPDFSRIGNQCLSSQGFADALMVHEFVQNFGHVLGIDLEIAPKLESLCAGLDGDANHAEQTLQLTRQLLRLALEFPGMGNEKRFGQGGGEMGLDRENFSEVMRLFLIDKGKRGEELSQPLLTCNFLSISPEQKASILAFLCDELVCSRNVVTEIDKNLDEISRLKGEKWMREGKARALRSARSKKKNDEKVVVVKEEQNHESDSEPPTRPDTPKKATVAPPTVVSVSPVSAAQQQQRKFTPGLGQCEVLTEQEESMSLQQMDSLIGDLHQEAQNINQKIHDTGLKIRSFPFGTDRFHRNYWMLAHTDKVIIESLATTSVNNPACNANEYASKDPPTLEQRVPGACETIDLDVIACVEDLVDDVVLLRAKADKKTRKRYRRIENHMKRGWWTMQNRDCVESLRSCMLSRGIRERALHRLLTKPWFLNELKFGTITIEPVGEKSDLELVRRQGWTRLNTAIDKLQCHLKMSDVSKPLPSITPFETQKPIVVPPTMALAQIVKDDMAWKVIDEEVDGQELDETIIRQKIIETADMVQPKFWRPKFQKLEDQDTCQLFEDWKSYVSTEAQTTSQLMVALQTLEGMIMWERSSREALCQICKSMDGDEMLVCDGCESGCHMECFRPRMTKVPEGDWFCQRCREEKSGRPMCMFCSRETGNLHQCQRCAYHVHQECSQDGPKEAINPETFICGHCQEMKQMRFVKRLILRSESEERELEDDNHAENGENTKNGHMNGMNGAIAIGVHNQQNGVKGNLKRKLEVPSIGGLPKNMNKELCQLMLDELVVQANALPFLEPVNPKLVPGYKMIISKPMDLKTIRQKNEKLIYETPEDFAEDIELMFANCRQFNIDHSEIGRAGISLHKFFQKRWKQLKYNFTKRLRRLHR.

Disordered stretches follow at residues 30–67 (AKIQ…QNEA), 178–215 (AKKK…AANN), and 235–269 (QKQQ…DVKN). Positions 35–45 (ATASSPSKSTN) are enriched in polar residues. Composition is skewed to low complexity over residues 46 to 63 (GTSA…TSSS) and 186 to 215 (ASTS…AANN). The span at 243-269 (DTQKKADQAKKAKELAKQQQKEQDVKN) shows a compositional bias: basic and acidic residues. Positions 323–395 (KTNEAMLRLP…DNFLFNTKLV (73 aa)) constitute an MBD domain. In terms of domain architecture, DDT spans 524 to 588 (SQGFADALMV…LRLALEFPGM (65 aa)). Basic and acidic residues predominate over residues 705-724 (KEEQNHESDSEPPTRPDTPK). The interval 705-729 (KEEQNHESDSEPPTRPDTPKKATVA) is disordered. Residues 1100–1149 (EALCQICKSMDGDEMLVCDGCESGCHMECFRPRMTKVPEGDWFCQRCREE) form a PHD-type zinc finger. The tract at residues 1218 to 1241 (EERELEDDNHAENGENTKNGHMNG) is disordered. Residues 1273–1377 (LPKNMNKELC…KFFQKRWKQL (105 aa)) form the Bromo domain.

It belongs to the WAL family. In terms of assembly, interacts with set-6. Broadly expressed in the nervous system, including head, body and tail neurons.

It localises to the nucleus. The protein resides in the chromosome. In terms of biological role, chromatin reader protein, involved in positively modulating the rate of age-related behavioral deterioration. Positively modulates the level of global trimethylated 'Lys-9' of histone H3 (H3K9me3), but not of H3K9me2 or H3K9me1. May repress the expression of mitochondrial function-related genes by occupying their promoter regions, working in concert with histone methyltransferase, set-6. Involved in modulation of the mitochondrial unfolded protein response (UPR). Negatively regulates expression of bas-1, a serotonin (5-HT) and dopamine synthesizing enzyme (DOPA decarboxylase), with aging. Negatively modulates levels of endogenous 5-HT and dopamine with aging. Involved in modulating longevity, probably as a result of enhanced stress resistance via mechanisms related to dietary restriction and mitochondrial function. The polypeptide is Bromodomain adjacent to zinc finger domain protein 2 (Caenorhabditis elegans).